A 332-amino-acid polypeptide reads, in one-letter code: FAD-dependent monooxygenase elcE (332 aa).

It belongs to the oxygen-dependent FAD-linked oxidoreductase family.

Its pathway is secondary metabolite biosynthesis. Functionally, FAD-dependent monooxygenase; part of the gene cluster that mediates the biosynthesis of elsinochrome C, a perelyenequinone phytotoxin structurally similar to cercosporin. The first step of elsinochrome C biosynthesis is performed by the polyketide synthase elcA which catalyzes the formation of nor-toralactone. The starter unit acyltransferase (SAT) domain of elcA initiates polyketide extension by the selective utilization of acetyl-CoA, which is elongated to the heptaketide in the beta-ketoacyl synthase (KS) domain by successive condensations with six malonyl units introduced by the malonyl acyltransferase (MAT) domain. The product template (PT) domain catalyzes C4-C9 and C2-C11 aldol cyclizations and dehydrations to a trihydroxynaphthalene, which is thought to be delivered to the thioesterase (TE) domain for product release. The bifunctional enzyme elcB then methylates nor-toralactone to toralactone before conducting an unusual oxidative aromatic ring opening. The next step in perylenequinone biosynthesis is an O-methylation at the nascent OH-6 of the elcB product performed by the O-methyltransferase elcD. The oxidative coupling of the two monomeric naphthol units in perylenequinone biosynthesis is catalyzed by the FAD-dependent monooxygenase elcE and the multicopper oxidase elcG. ElcG might catalyze the first intermolecular coupling in a regio- and stereo-selective manner via a phenol radical coupling mechanism and the elcE could forge the second C-C bond intramolecularly via a hydride transfer mechanism. The fasciclin domain-containing protein elcF might also play a role duting this step. The last piece of the puzzle in the biosynthesis of elsinochrome C is the additional annulation by enolate coupling to afford the dihydrobenzo(ghi)perylenequinone system, catalyzed by the FAD-dependent monooxygenase elcH. This chain is FAD-dependent monooxygenase elcE, found in Phaeosphaeria nodorum (strain SN15 / ATCC MYA-4574 / FGSC 10173) (Glume blotch fungus).